Consider the following 594-residue polypeptide: Adenine deaminase 1 (594 aa).

It belongs to the metallo-dependent hydrolases superfamily. Adenine deaminase family. The cofactor is Mn(2+).

It catalyses the reaction adenine + H2O + H(+) = hypoxanthine + NH4(+). This chain is Adenine deaminase 1, found in Latilactobacillus sakei subsp. sakei (strain 23K) (Lactobacillus sakei subsp. sakei).